A 1414-amino-acid chain; its full sequence is DNA-directed RNA polymerase subunit beta' (1414 aa).

Zn(2+)-binding residues include cysteine 70, cysteine 72, cysteine 85, and cysteine 88. 3 residues coordinate Mg(2+): aspartate 460, aspartate 462, and aspartate 464. Positions 814, 888, 895, and 898 each coordinate Zn(2+). Over residues glutamate 1392 to alanine 1403 the composition is skewed to low complexity. Residues glutamate 1392–glutamate 1414 form a disordered region.

Belongs to the RNA polymerase beta' chain family. The RNAP catalytic core consists of 2 alpha, 1 beta, 1 beta' and 1 omega subunit. When a sigma factor is associated with the core the holoenzyme is formed, which can initiate transcription. The cofactor is Mg(2+). Zn(2+) serves as cofactor.

It catalyses the reaction RNA(n) + a ribonucleoside 5'-triphosphate = RNA(n+1) + diphosphate. In terms of biological role, DNA-dependent RNA polymerase catalyzes the transcription of DNA into RNA using the four ribonucleoside triphosphates as substrates. The protein is DNA-directed RNA polymerase subunit beta' of Coxiella burnetii (strain Dugway 5J108-111).